The sequence spans 1529 residues: uncharacterized protein (1529 aa).

Over residues 1-11 (MDKNNNNNNSN) the composition is skewed to low complexity. 7 disordered regions span residues 1–85 (MDKN…SKGV), 335–371 (LLSN…WSSS), 660–694 (LPNL…TATA), 798–843 (NCNI…SSYS), 1016–1035 (SSLP…NTNN), 1334–1364 (QQQQ…QLQQ), and 1454–1497 (QQQV…SRLP). Positions 24–42 (QKRVQNPSFSSGQSRTVPS) are enriched in polar residues. A compositionally biased stretch (low complexity) spans 51-79 (ISSSSSSSSISTTNNTTTTTTSGTGSTSS). The segment covering 810 to 833 (NNNNNNNNNNNNNNNNNNNNNNNN) has biased composition (low complexity). Composition is skewed to polar residues over residues 834-843 (VLPRSNSSYS) and 1016-1027 (SSLPISQNLSDD). Low complexity predominate over residues 1454–1494 (QQQVQTPSSPQTLASLLGNSSSNTLTSSSSTLSLNESSTLS).

This is an uncharacterized protein from Dictyostelium discoideum (Social amoeba).